The chain runs to 71 residues: Peptide Ctri10261 (71 aa).

A signal peptide spans 1–23 (MKIPLILVTIAIILLMVPTESDA). Position 37 is a phenylalanine amide (F37). A propeptide spanning residues 41–71 (SLKNRDYFDYMQDPSLSNADLRELEELLEDY) is cleaved from the precursor.

Belongs to the non-disulfide-bridged peptide (NDBP) superfamily. Short antimicrobial peptide (group 4) family. In terms of tissue distribution, expressed by the venom gland.

The protein resides in the secreted. In terms of biological role, antimicrobial peptide. The polypeptide is Peptide Ctri10261 (Chaerilus tricostatus (Scorpion)).